A 234-amino-acid chain; its full sequence is Leucyl/phenylalanyl-tRNA--protein transferase (234 aa).

It belongs to the L/F-transferase family.

The protein resides in the cytoplasm. It catalyses the reaction N-terminal L-lysyl-[protein] + L-leucyl-tRNA(Leu) = N-terminal L-leucyl-L-lysyl-[protein] + tRNA(Leu) + H(+). It carries out the reaction N-terminal L-arginyl-[protein] + L-leucyl-tRNA(Leu) = N-terminal L-leucyl-L-arginyl-[protein] + tRNA(Leu) + H(+). The enzyme catalyses L-phenylalanyl-tRNA(Phe) + an N-terminal L-alpha-aminoacyl-[protein] = an N-terminal L-phenylalanyl-L-alpha-aminoacyl-[protein] + tRNA(Phe). In terms of biological role, functions in the N-end rule pathway of protein degradation where it conjugates Leu, Phe and, less efficiently, Met from aminoacyl-tRNAs to the N-termini of proteins containing an N-terminal arginine or lysine. This Shigella boydii serotype 18 (strain CDC 3083-94 / BS512) protein is Leucyl/phenylalanyl-tRNA--protein transferase.